The chain runs to 495 residues: Ectonucleoside triphosphate diphosphohydrolase 2 (495 aa).

Topologically, residues Met-1–Lys-4 are cytoplasmic. A helical transmembrane segment spans residues Leu-5–Leu-25. At Cys-26–Ser-462 the chain is on the extracellular side. N-linked (GlcNAc...) asparagine glycosylation is present at Asn-64. Cys-75 and Cys-99 are joined by a disulfide. A glycan (N-linked (GlcNAc...) asparagine) is linked at Asn-129. Glu-165 functions as the Proton acceptor in the catalytic mechanism. Gly-204–Gln-208 serves as a coordination point for ATP. Disulfide bonds link Cys-242–Cys-284 and Cys-265–Cys-310. N-linked (GlcNAc...) asparagine glycans are attached at residues Asn-294, Asn-306, and Asn-319. Cystine bridges form between Cys-323–Cys-328 and Cys-377–Cys-399. 2 N-linked (GlcNAc...) asparagine glycosylation sites follow: Asn-378 and Asn-443. The helical transmembrane segment at Ser-463–Leu-483 threads the bilayer. The Cytoplasmic portion of the chain corresponds to Arg-484 to Leu-495.

It belongs to the GDA1/CD39 NTPase family. Ca(2+) serves as cofactor. It depends on Mg(2+) as a cofactor. Expressed in brain, heart, vas deferens, kidney, skeletal muscle, thymus, lung and spleen. Weak expression in liver.

It is found in the cell membrane. In terms of biological role, in the nervous system, could hydrolyze ATP and other nucleotides to regulate purinergic neurotransmission. Hydrolyzes ADP only to a marginal extent. The polypeptide is Ectonucleoside triphosphate diphosphohydrolase 2 (Entpd2) (Rattus norvegicus (Rat)).